Consider the following 457-residue polypeptide: Argininosuccinate lyase (457 aa).

This sequence belongs to the lyase 1 family. Argininosuccinate lyase subfamily.

Its subcellular location is the cytoplasm. The catalysed reaction is 2-(N(omega)-L-arginino)succinate = fumarate + L-arginine. Its pathway is amino-acid biosynthesis; L-arginine biosynthesis; L-arginine from L-ornithine and carbamoyl phosphate: step 3/3. This chain is Argininosuccinate lyase, found in Klebsiella pneumoniae (strain 342).